The chain runs to 172 residues: 3-hydroxydecanoyl-[acyl-carrier-protein] dehydratase (172 aa).

His71 is a catalytic residue.

The protein belongs to the thioester dehydratase family. FabA subfamily. As to quaternary structure, homodimer.

It is found in the cytoplasm. The enzyme catalyses a (3R)-hydroxyacyl-[ACP] = a (2E)-enoyl-[ACP] + H2O. It catalyses the reaction (3R)-hydroxydecanoyl-[ACP] = (2E)-decenoyl-[ACP] + H2O. It carries out the reaction (2E)-decenoyl-[ACP] = (3Z)-decenoyl-[ACP]. It participates in lipid metabolism; fatty acid biosynthesis. Functionally, necessary for the introduction of cis unsaturation into fatty acids. Catalyzes the dehydration of (3R)-3-hydroxydecanoyl-ACP to E-(2)-decenoyl-ACP and then its isomerization to Z-(3)-decenoyl-ACP. Can catalyze the dehydratase reaction for beta-hydroxyacyl-ACPs with saturated chain lengths up to 16:0, being most active on intermediate chain length. In Maricaulis maris (strain MCS10) (Caulobacter maris), this protein is 3-hydroxydecanoyl-[acyl-carrier-protein] dehydratase.